A 307-amino-acid polypeptide reads, in one-letter code: MSDYSDLDRQIEQLKRCEIIKENEVKALCAKAREILVEEGNVQRVDSPVTVCGDIHGQFYDLKELFKVGGDVPEKNYLFMGDFVDRGYYSVETFLLLLALKVRYPDRITLIRGNHESRQITQVYGFYDECLRKYGSTAVWRYCTEIFDYLSLSAIIDGKIFCVHGGLSPSIQYLDQIRSIDRKQEVPHDGPMCDLLWSDPEDQTGWGVSPRGAGYLFGSDVVSQFNRTNDIDMICRAHQLVMEGFKWHFNETVLTVWSAPNYCYRCGNVAAILELNEYLHRDFVIFEAAPQESRGIPSKKPQADYFL.

4 residues coordinate Mn(2+): Asp54, His56, Asp82, and Asn114. The active-site Proton donor is the His115. Mn(2+)-binding residues include His164 and His238. The residue at position 307 (Leu307) is a Leucine methyl ester.

The protein belongs to the PPP phosphatase family. PP-4 (PP-X) subfamily. In terms of assembly, serine/threonine-protein phosphatase 4 (PP4) occurs in different assemblies of the catalytic and one or more regulatory subunits. Probably part of a PP4 PPP4C-PPP4R2-PPP4R3 complex containing Pp4-19C, PPP4R2r and flfl. Interacts with Ptpa; thereby mediating basal localization of the Miranda (Mira) complex; probably by dephosphorylation of Mira. The cofactor is Mn(2+). In terms of processing, reversibly methyl esterified on Leu-307 by leucine carboxyl methyltransferase 1 (LCMT1) and protein phosphatase methylesterase 1 (PPME1). Carboxyl methylation influences the affinity of the catalytic subunit for the different regulatory subunits, thereby modulating the PP2A holoenzyme's substrate specificity, enzyme activity and cellular localization.

It is found in the cytoplasm. The protein resides in the nucleus. Its subcellular location is the cytoskeleton. The protein localises to the microtubule organizing center. It localises to the centrosome. It carries out the reaction O-phospho-L-seryl-[protein] + H2O = L-seryl-[protein] + phosphate. The catalysed reaction is O-phospho-L-threonyl-[protein] + H2O = L-threonyl-[protein] + phosphate. In terms of biological role, protein phosphatase that regulates many processes such as microtubule organization at centrosomes. The probable PP4 complex Pp4-19C-PPP4R2r-flfl (PPP4C-PPP4R2-PPP4R3) is required to prevent caspase-induced cell death (in vitro). In Drosophila melanogaster (Fruit fly), this protein is Serine/threonine-protein phosphatase 4 catalytic subunit (Pp4-19C).